Consider the following 341-residue polypeptide: Methionine import ATP-binding protein MetN 2 (341 aa).

In terms of domain architecture, ABC transporter spans 2–241 (IQFKNISKHY…PQHPTTKTFI (240 aa)). 38-45 (GYSGAGKS) provides a ligand contact to ATP.

This sequence belongs to the ABC transporter superfamily. Methionine importer (TC 3.A.1.24) family. In terms of assembly, the complex is composed of two ATP-binding proteins (MetN), two transmembrane proteins (MetI) and a solute-binding protein (MetQ).

Its subcellular location is the cell inner membrane. It carries out the reaction L-methionine(out) + ATP + H2O = L-methionine(in) + ADP + phosphate + H(+). The enzyme catalyses D-methionine(out) + ATP + H2O = D-methionine(in) + ADP + phosphate + H(+). Its function is as follows. Part of the ABC transporter complex MetNIQ involved in methionine import. Responsible for energy coupling to the transport system. This chain is Methionine import ATP-binding protein MetN 2, found in Acinetobacter baylyi (strain ATCC 33305 / BD413 / ADP1).